Consider the following 420-residue polypeptide: Tyrosine--tRNA ligase (420 aa).

Y33 provides a ligand contact to L-tyrosine. Residues 38-47 (PTGPSLHAGH) carry the 'HIGH' region motif. Y167 and Q171 together coordinate L-tyrosine. The 'KMSKS' region motif lies at 227-231 (KFGKS). K230 serves as a coordination point for ATP. Residues 352–418 (RTIIDLLVAS…GKKNFAGVQI (67 aa)) form the S4 RNA-binding domain.

The protein belongs to the class-I aminoacyl-tRNA synthetase family. TyrS type 1 subfamily. As to quaternary structure, homodimer.

It is found in the cytoplasm. The catalysed reaction is tRNA(Tyr) + L-tyrosine + ATP = L-tyrosyl-tRNA(Tyr) + AMP + diphosphate + H(+). Catalyzes the attachment of tyrosine to tRNA(Tyr) in a two-step reaction: tyrosine is first activated by ATP to form Tyr-AMP and then transferred to the acceptor end of tRNA(Tyr). This Corynebacterium glutamicum (strain ATCC 13032 / DSM 20300 / JCM 1318 / BCRC 11384 / CCUG 27702 / LMG 3730 / NBRC 12168 / NCIMB 10025 / NRRL B-2784 / 534) protein is Tyrosine--tRNA ligase.